We begin with the raw amino-acid sequence, 455 residues long: tRNA-2-methylthio-N(6)-dimethylallyladenosine synthase (455 aa).

The MTTase N-terminal domain occupies K18–A133. Residues C27, C63, C97, C171, C175, and C178 each contribute to the [4Fe-4S] cluster site. The Radical SAM core domain occupies C157–E390. A TRAM domain is found at Q393 to V455.

The protein belongs to the methylthiotransferase family. MiaB subfamily. In terms of assembly, monomer. [4Fe-4S] cluster is required as a cofactor.

Its subcellular location is the cytoplasm. It catalyses the reaction N(6)-dimethylallyladenosine(37) in tRNA + (sulfur carrier)-SH + AH2 + 2 S-adenosyl-L-methionine = 2-methylsulfanyl-N(6)-dimethylallyladenosine(37) in tRNA + (sulfur carrier)-H + 5'-deoxyadenosine + L-methionine + A + S-adenosyl-L-homocysteine + 2 H(+). Functionally, catalyzes the methylthiolation of N6-(dimethylallyl)adenosine (i(6)A), leading to the formation of 2-methylthio-N6-(dimethylallyl)adenosine (ms(2)i(6)A) at position 37 in tRNAs that read codons beginning with uridine. The chain is tRNA-2-methylthio-N(6)-dimethylallyladenosine synthase from Bacteroides thetaiotaomicron (strain ATCC 29148 / DSM 2079 / JCM 5827 / CCUG 10774 / NCTC 10582 / VPI-5482 / E50).